The sequence spans 473 residues: FAD-dependent monooxygenase ctvC (473 aa).

Positions 37, 51, and 110 each coordinate FAD. Residues 218-238 (IGPGFTFLIFPAAGDSLFWVL) traverse the membrane as a helical segment. FAD contacts are provided by aspartate 310 and alanine 323. N-linked (GlcNAc...) asparagine glycosylation is present at asparagine 358. A helical transmembrane segment spans residues 451 to 471 (LVYCFGVVILLWISWAVFNVN).

It belongs to the paxM FAD-dependent monooxygenase family. FAD serves as cofactor.

The protein resides in the membrane. The protein operates within mycotoxin biosynthesis. Its function is as follows. FAD-dependent monooxygenase; part of the gene cluster that mediates the biosynthesis of citreoviridin, an inhibitor of the of F1-ATPase beta-subunit. The HR-PKS ctvA accepts acetyl-CoA as the starter unit and catalyzes eight iterations of malonyl-CoA extension and four iterations of SAM-dependent methylation at C4, C12, C14, and C16. The KR and DH domains selectively act on the first six iterations to generate the hexaene chain. In the last three iterations, the KR and DH domains terminate their functions to yield a beta,delta-diketo ester moiety, which then undergoes intramolecular cyclization to yield an alpha-pyrone intermediate. Subsequently, ctvB methylates the alpha-pyrone hydroxyl group to generate citreomontanin. In order to form the tetrahydrofuran ring with the correct stereochemistry, the terminal alkenes of citreomontanin need to undergo isomerization to yield a (17Z)-hexaene, a step that could be catalyzed by ctvC. The (17Z)-hexaene then undergoes bisepoxidation by ctvC to form a (17R,16R,15S,14R)-bisepoxide moiety. Lastly, ctvD acts as a regioselective hydrolase to form the tetrahydrofuran ring with the substituents in the correct absolute configuration, completing the biosynthesis of citreoviridin. The chain is FAD-dependent monooxygenase ctvC from Aspergillus terreus (strain NIH 2624 / FGSC A1156).